The following is a 136-amino-acid chain: Glutaredoxin-C8 (136 aa).

Residues S33 to D135 enclose the Glutaredoxin domain. An intrachain disulfide couples C53 to C56.

This sequence belongs to the glutaredoxin family. CPYC subfamily.

The protein localises to the cytoplasm. Functionally, has a glutathione-disulfide oxidoreductase activity in the presence of NADPH and glutathione reductase. Reduces low molecular weight disulfides and proteins. The protein is Glutaredoxin-C8 (GRXC8) of Oryza sativa subsp. japonica (Rice).